The primary structure comprises 495 residues: Cytochrome P450 monooxygenase FrzC (495 aa).

The helical transmembrane segment at 8–28 threads the bilayer; it reads GLVVGLWVTYHILLGTYNVFF. C437 is a heme binding site.

This sequence belongs to the cytochrome P450 family. Heme serves as cofactor.

It is found in the membrane. The catalysed reaction is (S,S)-2,5-di-(p-hydroxybenzyl)piperazine + reduced [NADPH--hemoprotein reductase] + O2 = (1S,4S)-4-[(4-hydroxyphenyl)methyl]-2,5-diazaspiro[bicyclo[3.2.1]octane-6,1'-cyclohexane]-2',5'-dien-4'-one + oxidized [NADPH--hemoprotein reductase] + 2 H2O + H(+). The protein operates within secondary metabolite biosynthesis. Cytochrome P450 monooxygenase; part of the gene cluster that mediates the biosynthesis of the alkaloid (-)-FR901483, a potent immunosuppressant that shows efficacy in animal models and a probable inhibitor of purine nucleotide biosynthesis by targeting phosphoribosylpyrophosphate amidotransferase (PPAT). Within the pathway, FrzC catalyzes the coupling between N10 and C1' to produce a 1,4-diazabicyclo[3.2.1]octane spiro-fused to a 2,5-cyclohexadienone. FrzC probably first catalyzes homolysis of the N-H bond to generate the N10 radical which is followed by an O-H abstraction to give the phenolic radical which can be delocalized to C1'. Radical coupling between N10 and C1' then forms. The biosynthesis of (-)-FR901483 starts with the condensation of two L-tyrosines to yield (S,S)-dityrosyl-piperazine. This process occurs in 3 steps with the non-canonical nonribosomal peptide synthetase FrzA catalyzing the reduction of L-tyrosine into L-tyrosinal, the spontaneous condensation of 2 L-tyrosinal units, and the subsequent reduction by the NmrA-like family domain-containing oxidoreductase FrzB. The cytochrome P450 monooxygenase FrzC then performs coupling between N10 and C1' to morph the piperazine into a 1,4-diazabicyclo[3.2.1]octane spiro-fused to a 2,5-cyclohexadienone. The dienone portion is further reduced to cyclohexanone by the flavin-dependent reductase FrzD. The methyltranserases (MTs) FrzE and FrzF are then involved in the methylation at the C10' amine and the C4 phenolic oxygen, respectively. The order of the two MTs appear to be interchangeable. Cleavage of the C9-N10' bond by the dioxygenase FrzG then leads to formation of a conjugated iminium. In addition to the oxidation of C9, an additional dehydrogenation between C7 and C8 can occur to give a likely shunt product. The next biosynthetic step is the intramolecular aldol condensation catalyzed by the newly identified aldolase FrzH to yield an aza-tricyclic product with the formation of a C9-C3' bond. The short-chain dehydrogenase/reductase FrzI then produces dephospho-(-)-FR901483 that is phosphorylated at C4'-OH into (-)-FR901483 by the phosphotransferase FrzJ. The chain is Cytochrome P450 monooxygenase FrzC from Cladobotryum sp.